The primary structure comprises 366 residues: DNA replication and repair protein RecF (366 aa).

30 to 37 (GDNGMGKT) provides a ligand contact to ATP.

This sequence belongs to the RecF family.

It is found in the cytoplasm. In terms of biological role, the RecF protein is involved in DNA metabolism; it is required for DNA replication and normal SOS inducibility. RecF binds preferentially to single-stranded, linear DNA. It also seems to bind ATP. The sequence is that of DNA replication and repair protein RecF from Azobacteroides pseudotrichonymphae genomovar. CFP2.